The following is a 563-amino-acid chain: MDVGELLSYQPNRGTKRPRDDEEEELKTRRKQTGPRERGRYREEEATAAEDTADDKKRLLQIIDRDGEEEEEEEEPLDESSVKKMILTFEKRSYKNQELRIKFPDNPEKFMESELDLNDIIQEMHVVATMPDLYHLLVELSAVQSLLGLLGHDNTDVSIAVVDLLQELTDIDTLHESEEGAEVLIDALVDGQVAALLVQNLERLDESVREEADGVHNTLAIVENMAEFRPEMCTEAAQQGLLQWLLKRLKAKMPFDANKLYCSEVLAILLQDNDENRELLGELDGIDVLLQQLSVFKRHNPSTAEEQEMMENLFDALCSCLMLSSNRERFLKGEGLQLMNLMLREKKVSRSSALKVLDHAMIGPEGTDNCHKFVDILGLRTIFPLFMKSPRKIKKVGTTEKEHEEHVCSILASLLRNLRGQQRTRLLNKFTENDSEKVDRLMELHFKYLSAMQVADKKIEGEKHDIVRRGEIIDNDMEDEFYLRRLDAGLFILQHICYIMAEICNANVPQIRQRVHQILNMRGSSIKIVRHIIKEYAENIGDGRSPEFRETEQKRILALLENF.

N-acetylmethionine is present on Met1. The disordered stretch occupies residues 1 to 81 (MDVGELLSYQ…EEEEPLDESS (81 aa)). The Nuclear localization signal signature appears at 16–33 (KRPRDDEEEELKTRRKQT). The span at 34-45 (GPRERGRYREEE) shows a compositional bias: basic and acidic residues. Over residues 66 to 78 (DGEEEEEEEEPLD) the composition is skewed to acidic residues. HEAT repeat units follow at residues 79–129 (ESSV…VVAT) and 134–176 (YHLL…TLHE). The residue at position 91 (Lys91) is an N6-acetyllysine. Positions 130-140 (MPDLYHLLVEL) match the Nuclear export signal (NES) motif. 5 ARM repeats span residues 178 to 228 (EEGA…MAEF), 229 to 273 (RPEM…LQDN), 274 to 323 (DENR…CLML), 325 to 363 (SNRE…AMIG), and 364 to 417 (PEGT…LLRN). Ser389 bears the Phosphoserine mark. Positions 476–540 (DMEDEFYLRR…HIIKEYAENI (65 aa)) form a coiled coil. The residue at position 545 (Ser545) is a Phosphoserine.

In terms of assembly, component of the PRP19-CDC5L splicing complex composed of a core complex comprising a homotetramer of PRPF19, CDC5L, PLRG1 and BCAS2, and at least three less stably associated proteins CTNNBL1, CWC15 and HSPA8. Interacts directly with CWC15 and CDC5L in the complex. Interacts with AICDA; the interaction is important for the antibody diversification activity of AICDA. Interacts with PRPF31 (via its NLS). Interacts (via its N-terminal NLS) with KPNA1 and KPNA2.

It is found in the nucleus. Its function is as follows. Component of the PRP19-CDC5L complex that forms an integral part of the spliceosome and is required for activating pre-mRNA splicing. Participates in AID/AICDA-mediated somatic hypermutation (SHM) and class-switch recombination (CSR), 2 processes resulting in the production of high-affinity, mutated isotype-switched antibodies. The polypeptide is Beta-catenin-like protein 1 (Ctnnbl1) (Mus musculus (Mouse)).